A 155-amino-acid polypeptide reads, in one-letter code: Aspartate carbamoyltransferase regulatory chain (155 aa).

The Zn(2+) site is built by cysteine 112, cysteine 117, cysteine 140, and cysteine 143.

Belongs to the PyrI family. In terms of assembly, contains catalytic and regulatory chains. It depends on Zn(2+) as a cofactor.

Involved in allosteric regulation of aspartate carbamoyltransferase. The chain is Aspartate carbamoyltransferase regulatory chain from Phocaeicola vulgatus (strain ATCC 8482 / DSM 1447 / JCM 5826 / CCUG 4940 / NBRC 14291 / NCTC 11154) (Bacteroides vulgatus).